Consider the following 467-residue polypeptide: UDP-N-acetylmuramate--L-alanine ligase (467 aa).

Residue 114 to 120 (GTHGKTT) coordinates ATP.

It belongs to the MurCDEF family.

The protein resides in the cytoplasm. The catalysed reaction is UDP-N-acetyl-alpha-D-muramate + L-alanine + ATP = UDP-N-acetyl-alpha-D-muramoyl-L-alanine + ADP + phosphate + H(+). The protein operates within cell wall biogenesis; peptidoglycan biosynthesis. Its function is as follows. Cell wall formation. This is UDP-N-acetylmuramate--L-alanine ligase from Bradyrhizobium diazoefficiens (strain JCM 10833 / BCRC 13528 / IAM 13628 / NBRC 14792 / USDA 110).